Reading from the N-terminus, the 189-residue chain is dTTP/UTP pyrophosphatase (189 aa).

The active-site Proton acceptor is Asp71.

Belongs to the Maf family. YhdE subfamily. It depends on a divalent metal cation as a cofactor.

The protein resides in the cytoplasm. The enzyme catalyses dTTP + H2O = dTMP + diphosphate + H(+). It carries out the reaction UTP + H2O = UMP + diphosphate + H(+). In terms of biological role, nucleoside triphosphate pyrophosphatase that hydrolyzes dTTP and UTP. May have a dual role in cell division arrest and in preventing the incorporation of modified nucleotides into cellular nucleic acids. This is dTTP/UTP pyrophosphatase from Pseudoalteromonas translucida (strain TAC 125).